The sequence spans 287 residues: Ribosomal RNA small subunit methyltransferase A (287 aa).

Asparagine 28, leucine 30, glycine 55, glutamate 77, aspartate 103, and asparagine 123 together coordinate S-adenosyl-L-methionine.

This sequence belongs to the class I-like SAM-binding methyltransferase superfamily. rRNA adenine N(6)-methyltransferase family. RsmA subfamily.

Its subcellular location is the cytoplasm. It carries out the reaction adenosine(1518)/adenosine(1519) in 16S rRNA + 4 S-adenosyl-L-methionine = N(6)-dimethyladenosine(1518)/N(6)-dimethyladenosine(1519) in 16S rRNA + 4 S-adenosyl-L-homocysteine + 4 H(+). Its function is as follows. Specifically dimethylates two adjacent adenosines (A1518 and A1519) in the loop of a conserved hairpin near the 3'-end of 16S rRNA in the 30S particle. May play a critical role in biogenesis of 30S subunits. This is Ribosomal RNA small subunit methyltransferase A from Nitrobacter winogradskyi (strain ATCC 25391 / DSM 10237 / CIP 104748 / NCIMB 11846 / Nb-255).